A 197-amino-acid chain; its full sequence is Glycerol-3-phosphate acyltransferase (197 aa).

5 consecutive transmembrane segments (helical) span residues 5–25 (IYIA…GLIL), 54–74 (GLAA…VIIA), 80–100 (AEAA…PVWL), 112–132 (IGVL…LWLA), and 153–173 (IFLW…LTLL).

It belongs to the PlsY family. Probably interacts with PlsX.

The protein resides in the cell inner membrane. It catalyses the reaction an acyl phosphate + sn-glycerol 3-phosphate = a 1-acyl-sn-glycero-3-phosphate + phosphate. Its pathway is lipid metabolism; phospholipid metabolism. Its function is as follows. Catalyzes the transfer of an acyl group from acyl-phosphate (acyl-PO(4)) to glycerol-3-phosphate (G3P) to form lysophosphatidic acid (LPA). This enzyme utilizes acyl-phosphate as fatty acyl donor, but not acyl-CoA or acyl-ACP. The sequence is that of Glycerol-3-phosphate acyltransferase from Rhodopseudomonas palustris (strain HaA2).